The following is a 167-amino-acid chain: Mitochondrial fission 1 protein B (167 aa).

A TPR repeat occupies 92–125; the sequence is REKLYLLALGYYRSGDFSRSRDCIERCLEVEPES. Residues 144–164 form a helical membrane-spanning segment; sequence VIGVGIAVTAVGVVAGIAAAI.

The protein belongs to the FIS1 family. As to quaternary structure, interacts with PEX11A, PEX11B, PEX11C, PEX11D and PEX11E.

Its subcellular location is the mitochondrion outer membrane. The protein resides in the peroxisome membrane. Functionally, component of the peroxisomal and mitochondrial division machineries. Plays a role in promoting the fission of mitochondria and peroxisomes. In association with PEX11C, PEX11D, PEX11E and DRP3A, is involved in cell cycle-associated constitutive self-replication of preexisting peroxisomes. The protein is Mitochondrial fission 1 protein B (FIS1B) of Arabidopsis thaliana (Mouse-ear cress).